The sequence spans 428 residues: 3-phosphoshikimate 1-carboxyvinyltransferase (428 aa).

Lys19, Ser20, and Arg24 together coordinate 3-phosphoshikimate. Residue Lys19 coordinates phosphoenolpyruvate. Phosphoenolpyruvate is bound by residues Gly91 and Arg119. Residues Ser164, Gln166, Asp312, and Lys339 each contribute to the 3-phosphoshikimate site. Residue Gln166 coordinates phosphoenolpyruvate. Catalysis depends on Asp312, which acts as the Proton acceptor. Residues Arg343 and Arg386 each coordinate phosphoenolpyruvate.

It belongs to the EPSP synthase family. As to quaternary structure, monomer.

It is found in the cytoplasm. It catalyses the reaction 3-phosphoshikimate + phosphoenolpyruvate = 5-O-(1-carboxyvinyl)-3-phosphoshikimate + phosphate. The protein operates within metabolic intermediate biosynthesis; chorismate biosynthesis; chorismate from D-erythrose 4-phosphate and phosphoenolpyruvate: step 6/7. Functionally, catalyzes the transfer of the enolpyruvyl moiety of phosphoenolpyruvate (PEP) to the 5-hydroxyl of shikimate-3-phosphate (S3P) to produce enolpyruvyl shikimate-3-phosphate and inorganic phosphate. This Bacillus licheniformis (strain ATCC 14580 / DSM 13 / JCM 2505 / CCUG 7422 / NBRC 12200 / NCIMB 9375 / NCTC 10341 / NRRL NRS-1264 / Gibson 46) protein is 3-phosphoshikimate 1-carboxyvinyltransferase.